The sequence spans 553 residues: 5'-nucleotidase (553 aa).

The N-terminal stretch at 1-21 (MKQRLIVKTALSAAILATLAG) is a signal peptide. Cys22 carries N-palmitoyl cysteine lipidation. Cys22 carries S-diacylglycerol cysteine lipidation. Asp45, His47, Asp88, Asn120, His221, His256, and Gln258 together coordinate a divalent metal cation. Substrate contacts are provided by residues Phe432 and 501–507 (YNAAGGD).

The protein belongs to the 5'-nucleotidase family. It depends on chloride as a cofactor. The cofactor is Mg(2+).

It is found in the cell outer membrane. The enzyme catalyses a ribonucleoside 5'-phosphate + H2O = a ribonucleoside + phosphate. Functionally, degradation of extracellular 5'-nucleotides for nutritional needs. The polypeptide is 5'-nucleotidase (nutA) (Vibrio vulnificus (strain CMCP6)).